The chain runs to 89 residues: Arminin 7519 (89 aa).

An N-terminal signal peptide occupies residues 1–18; it reads MRSTFAVLFLALIALTYS. Positions 19–59 are excised as a propeptide; the sequence is KNYQDVKEEIKNEVENEILRDLGEDDDELDDNAQEAVNDAR. Residue A86 is modified to Alanine amide.

It belongs to the arminin family. As to expression, expressed in entodermal epithelium along the body column.

It localises to the secreted. It is found in the target cell membrane. Functionally, antimicrobial peptide with a broad-spectrum antimicrobial activity. Keeps its antibacterial activity under a wide range of salt concentrations that mimic physiological conditions of human blood, which is surprising, since Hydra is an obligate freshwater animal with nearly no salt tolerance. Does not affect red blood cells. This Hydra vulgaris (Hydra) protein is Arminin 7519.